The primary structure comprises 355 residues: tRNA uridine(34) hydroxylase (355 aa).

The 95-residue stretch at aspartate 146–leucine 240 folds into the Rhodanese domain. The active-site Cysteine persulfide intermediate is the cysteine 200.

Belongs to the TrhO family.

The enzyme catalyses uridine(34) in tRNA + AH2 + O2 = 5-hydroxyuridine(34) in tRNA + A + H2O. Its function is as follows. Catalyzes oxygen-dependent 5-hydroxyuridine (ho5U) modification at position 34 in tRNAs. This Pectobacterium atrosepticum (strain SCRI 1043 / ATCC BAA-672) (Erwinia carotovora subsp. atroseptica) protein is tRNA uridine(34) hydroxylase.